Consider the following 705-residue polypeptide: Voltage-dependent calcium channel beta subunit-associated regulatory protein (705 aa).

Residues 1 to 45 (MQPTATMATAATTTTTTTATVALTTSWDNATGRPTAEPDPILDNY) are Extracellular-facing. The N-linked (GlcNAc...) asparagine glycan is linked to N29. The chain crosses the membrane as a helical; Signal-anchor for type III membrane protein span at residues 46 to 66 (VLLVVVMSLFVGGTLVVLSGV). Residues 67-705 (LLLCKRCWDV…APTSPDHSPA (639 aa)) lie on the Cytoplasmic side of the membrane. 2 disordered regions span residues 91–113 (TTTYLDNGTHPAQDPDFRGEDPE) and 212–284 (GKAL…GSGA). A compositionally biased stretch (polar residues) spans 245–254 (PSASSDSGEG). A compositionally biased stretch (gly residues) spans 267–284 (GGPGAAAGPGEAGPGSGA). Residues S299 and S304 each carry the phosphoserine modification. Disordered regions lie at residues 316-353 (PSQRAASLDTRGSPKRHHFQRQRAASESTEQEEGDAPQ), 369-436 (FPHP…SYRD), 448-540 (AAAS…RRDY), and 559-655 (HFDD…CPGS). The segment covering 344–353 (TEQEEGDAPQ) has biased composition (acidic residues). Residues 371–382 (HPRPFLASPPPA) show a composition bias toward pro residues. Positions 383–397 (LGRLEAAEAAGGASP) are enriched in low complexity. Positions 479–488 (AFPPPSPPAP) are enriched in pro residues. Residues 489–499 (RPKDGEARRLL) are compositionally biased toward basic and acidic residues. Phosphoserine occurs at positions 507 and 528. Over residues 567–585 (ARHRARAHPHARKQWQRGR) the composition is skewed to basic residues. The segment covering 591–614 (GARAAPALAGTPAPPAGAARPARA) has biased composition (low complexity). S621 bears the Phosphoserine mark. T698 bears the Phosphothreonine mark. Residues S699 and S703 each carry the phosphoserine modification.

As to quaternary structure, interacts with voltage-dependent calcium channels CACNB1, CACNB2, CACNB3 and CACNB4 beta subunits; prevents their interaction with the CACNA1C alpha subunit thereby negatively regulating the activity of the corresponding calcium channels.

Its subcellular location is the cytoplasmic vesicle. The protein resides in the secretory vesicle. It is found in the synaptic vesicle membrane. The protein localises to the cell membrane. It localises to the cell projection. Its subcellular location is the growth cone. In terms of biological role, negatively regulates voltage-gated calcium channels by preventing the interaction between their alpha and beta subunits. Thereby, negatively regulates calcium channels activity at the plasma membrane and indirectly inhibits calcium-regulated exocytosis. This Homo sapiens (Human) protein is Voltage-dependent calcium channel beta subunit-associated regulatory protein.